Reading from the N-terminus, the 150-residue chain is MQIILLEKVANLGVLGDVVKVKDGYARNYLIPQGKAKRATQSNMAQFEALRAELERAHAEKLAEAQAIATKLEGLMVQISRKAGMDGRLFGSVSNIDIVDALETQGFKVERSAVRMPEGPIKQVGDSQVDVALHSDIVVPITVSVLGEQQ.

Belongs to the bacterial ribosomal protein bL9 family.

Functionally, binds to the 23S rRNA. The polypeptide is Large ribosomal subunit protein bL9 (Aromatoleum aromaticum (strain DSM 19018 / LMG 30748 / EbN1) (Azoarcus sp. (strain EbN1))).